We begin with the raw amino-acid sequence, 57 residues long: Small hydrophobic protein (57 aa).

The Virion surface segment spans residues 1–8; sequence MPAIQPPL. A helical membrane pass occupies residues 9–29; it reads YPTFLLLILLSLIITLYVWII. Residues 30–57 are Intravirion-facing; sequence STITYKTAVRHAALHQRSFSRWSLDHSL.

Belongs to the rubulavirus small hydrophobic protein family. Interacts with host TNFRSF1A, RIPK1 and IRAK1; these interactions interfere with host NF-kappa-B activation at the level of receptor complexes. Interacts with host protein UBQLN4.

The protein localises to the virion membrane. Its subcellular location is the host cell membrane. Functionally, plays a role in the inhibition of the host NF-kappa-B pathway. This inhibition occurs at the receptor level, by preventing the signaling of TNFR1 as well as IL-1R and TLR3. This Mumps virus genotype B (strain Miyahara vaccine) (MuV) protein is Small hydrophobic protein (SH).